A 512-amino-acid polypeptide reads, in one-letter code: Probable cobyric acid synthase (512 aa).

The region spanning 275–460 (SVTVAVPHLP…LHGLFGNDAA (186 aa)) is the GATase cobBQ-type domain. Cys353 serves as the catalytic Nucleophile. The active site involves His452.

This sequence belongs to the CobB/CobQ family. CobQ subfamily.

The protein operates within cofactor biosynthesis; adenosylcobalamin biosynthesis. Functionally, catalyzes amidations at positions B, D, E, and G on adenosylcobyrinic A,C-diamide. NH(2) groups are provided by glutamine, and one molecule of ATP is hydrogenolyzed for each amidation. This chain is Probable cobyric acid synthase, found in Halobacterium salinarum (strain ATCC 29341 / DSM 671 / R1).